The following is a 166-amino-acid chain: MSNIEKQAGELQEKLIAVNRVSKTVKGGRIMSFTALTVVGDGNGRVGFGYGKAREVPAAIQKAMEKARRNMINVALNEGTLQHPVKGSHTGSRVFMQPASEGTGIIAGGAMRAVLEVAGVRNVLSKAYGSTNPINVVRATIDALANMKSPEMVAAKRGKTVEEILG.

The S5 DRBM domain maps to 11-74 (LQEKLIAVNR…EKARRNMINV (64 aa)).

This sequence belongs to the universal ribosomal protein uS5 family. In terms of assembly, part of the 30S ribosomal subunit. Contacts proteins S4 and S8.

Functionally, with S4 and S12 plays an important role in translational accuracy. In terms of biological role, located at the back of the 30S subunit body where it stabilizes the conformation of the head with respect to the body. The chain is Small ribosomal subunit protein uS5 from Actinobacillus pleuropneumoniae serotype 5b (strain L20).